A 104-amino-acid polypeptide reads, in one-letter code: NADH-ubiquinone oxidoreductase 12 kDa subunit, mitochondrial (104 aa).

It belongs to the complex I NDUFS6 subunit family. In terms of assembly, complex I is composed of about 40 different subunits.

The protein resides in the mitochondrion inner membrane. Functionally, accessory subunit of the mitochondrial membrane respiratory chain NADH dehydrogenase (Complex I), that is believed not to be involved in catalysis. Complex I functions in the transfer of electrons from NADH to the respiratory chain. The immediate electron acceptor for the enzyme is believed to be ubiquinone. This is NADH-ubiquinone oxidoreductase 12 kDa subunit, mitochondrial (nuo-12.3) from Neurospora crassa (strain ATCC 24698 / 74-OR23-1A / CBS 708.71 / DSM 1257 / FGSC 987).